A 266-amino-acid polypeptide reads, in one-letter code: DNA-directed RNA polymerase subunit Rpo3 (266 aa).

Residues Cys205, Cys208, and Cys211 each coordinate [3Fe-4S] cluster.

Belongs to the archaeal Rpo3/eukaryotic RPB3 RNA polymerase subunit family. As to quaternary structure, part of the RNA polymerase complex. [3Fe-4S] cluster serves as cofactor.

It localises to the cytoplasm. The catalysed reaction is RNA(n) + a ribonucleoside 5'-triphosphate = RNA(n+1) + diphosphate. Its function is as follows. DNA-dependent RNA polymerase (RNAP) catalyzes the transcription of DNA into RNA using the four ribonucleoside triphosphates as substrates. The protein is DNA-directed RNA polymerase subunit Rpo3 of Methanosarcina mazei (strain ATCC BAA-159 / DSM 3647 / Goe1 / Go1 / JCM 11833 / OCM 88) (Methanosarcina frisia).